The primary structure comprises 545 residues: Chaperonin GroEL 1 (545 aa).

ATP is bound by residues Thr-30–Pro-33, Lys-51, Asp-87–Thr-91, Gly-415, and Asp-495.

This sequence belongs to the chaperonin (HSP60) family. In terms of assembly, forms a cylinder of 14 subunits composed of two heptameric rings stacked back-to-back. Interacts with the co-chaperonin GroES.

The protein localises to the cytoplasm. It catalyses the reaction ATP + H2O + a folded polypeptide = ADP + phosphate + an unfolded polypeptide.. Its function is as follows. Together with its co-chaperonin GroES, plays an essential role in assisting protein folding. The GroEL-GroES system forms a nano-cage that allows encapsulation of the non-native substrate proteins and provides a physical environment optimized to promote and accelerate protein folding. This is Chaperonin GroEL 1 from Rhizobium etli (strain ATCC 51251 / DSM 11541 / JCM 21823 / NBRC 15573 / CFN 42).